The chain runs to 510 residues: Sulfoquinovosyl transferase SQD2 (510 aa).

The transit peptide at 1–83 directs the protein to the chloroplast; sequence MTTLSSINLS…SNDMTITQVR (83 aa). S88 carries the post-translational modification Phosphoserine. Residues 198–218 form a helical membrane-spanning segment; that stretch reads PGVMVFGALAIAKMLSVPIVM.

It belongs to the glycosyltransferase group 1 family. Glycosyltransferase 4 subfamily.

It is found in the plastid. The protein localises to the chloroplast membrane. The enzyme catalyses UDP-alpha-D-6-sulfoquinovose + a 1,2-diacyl-sn-glycerol = a 6-sulfo-alpha-D-quinovosyldiacylglycerol + UDP + H(+). Its pathway is glycolipid biosynthesis. Its function is as follows. Catalyzes the transfer of the sulfoquinovose moiety from UDP-sulfoquinovose to diacylglycerol during sulfolipid biosynthesis. Sulfolipid contributes to maintaining a negatively charged lipid-water interface, a requirement for proper function of photosynthetic membranes. Sulfolipid may also function as a substitute of anionic phospholipids under phosphate-limited growth conditions. This is Sulfoquinovosyl transferase SQD2 from Arabidopsis thaliana (Mouse-ear cress).